Consider the following 357-residue polypeptide: Ribonuclease 3 (357 aa).

In terms of domain architecture, RNase III spans Ile6–Asn155. A Mg(2+)-binding site is contributed by Glu45. Asp49 is a catalytic residue. Mg(2+) contacts are provided by Asp141 and Glu144. Glu144 is an active-site residue. DRBM domains follow at residues Pro198–Asp267 and Asp285–Glu355.

It belongs to the ribonuclease III family. Homodimer. Requires Mg(2+) as cofactor.

The protein localises to the cytoplasm. It carries out the reaction Endonucleolytic cleavage to 5'-phosphomonoester.. Digests double-stranded RNA. Involved in the processing of primary rRNA transcript to yield the immediate precursors to the large and small rRNAs (23S and 16S). Processes some mRNAs, and tRNAs when they are encoded in the rRNA operon. Processes pre-crRNA and tracrRNA of type II CRISPR loci if present in the organism. The protein is Ribonuclease 3 (rnc) of Roseburia hominis (strain DSM 16839 / JCM 17582 / NCIMB 14029 / A2-183).